The following is a 443-amino-acid chain: MSMTTTRFAPSPTGYIHVGNLRTALMNYLIARKAGGTFILRIDDTDPERSKEEYVDAIKQDLDWLGLHWDRVERQSERLDRYAEAADKLRAMGRFYEAFETPTELDLKRKKQLNMGKPPVYDRAALALSEGEKEALRAERGNGVWRFKLDQERIEWTDGILGDISIDAASVSDPVLIRGDGQVLYTLASVVDDTDMGVTDVVRGSDHVTNTATQIQIMAALGFEHPRFAHHSLLTGPQGEALSKRLGTLALRDLREQGVQPMALLSLMARLGSSDPVELRSDMAELIEGFDVTRFGAAPTKFDVQDLFPLTGRYLQALPLEAVAKDVAAAGVPEDLAAPFWSMARENITTLNDLAGWWALCRDGAEPLIADEDRAFVTEAMALLPEGPLDADSWGAWTQAVKEATGRKGKGLFMPLRKAVTGMERGPEMATLLPLMQVIRARG.

The 'HIGH' region motif lies at 10 to 20 (PSPTGYIHVGN). Positions 241-245 (ALSKR) match the 'KMSKS' region motif. Lys-244 serves as a coordination point for ATP.

Belongs to the class-I aminoacyl-tRNA synthetase family. Glutamate--tRNA ligase type 1 subfamily. Monomer.

It is found in the cytoplasm. The catalysed reaction is tRNA(Glu) + L-glutamate + ATP = L-glutamyl-tRNA(Glu) + AMP + diphosphate. In terms of biological role, catalyzes the attachment of glutamate to tRNA(Glu) in a two-step reaction: glutamate is first activated by ATP to form Glu-AMP and then transferred to the acceptor end of tRNA(Glu). This is Glutamate--tRNA ligase 1 from Ruegeria pomeroyi (strain ATCC 700808 / DSM 15171 / DSS-3) (Silicibacter pomeroyi).